Here is a 157-residue protein sequence, read N- to C-terminus: Small ribosomal subunit protein uS7 (157 aa).

It belongs to the universal ribosomal protein uS7 family. Part of the 30S ribosomal subunit. Contacts proteins S9 and S11.

Functionally, one of the primary rRNA binding proteins, it binds directly to 16S rRNA where it nucleates assembly of the head domain of the 30S subunit. Is located at the subunit interface close to the decoding center, probably blocks exit of the E-site tRNA. The sequence is that of Small ribosomal subunit protein uS7 from Akkermansia muciniphila (strain ATCC BAA-835 / DSM 22959 / JCM 33894 / BCRC 81048 / CCUG 64013 / CIP 107961 / Muc).